Reading from the N-terminus, the 489-residue chain is Betaine aldehyde dehydrogenase (489 aa).

The K(+) site is built by Thr26 and Asp93. 150–152 provides a ligand contact to NAD(+); the sequence is GAW. Lys162 functions as the Charge relay system in the catalytic mechanism. 176–179 contacts NAD(+); it reads KPSE. Val180 provides a ligand contact to K(+). 229 to 232 lines the NAD(+) pocket; sequence GVET. Leu245 is a binding site for K(+). Glu251 serves as the catalytic Proton acceptor. 3 residues coordinate NAD(+): Gly253, Cys285, and Glu386. Cys285 (nucleophile) is an active-site residue. Cys285 is modified (cysteine sulfenic acid (-SOH)). The K(+) site is built by Lys456 and Gly459. Glu463 serves as the catalytic Charge relay system.

The protein belongs to the aldehyde dehydrogenase family. As to quaternary structure, dimer of dimers. Requires K(+) as cofactor.

It catalyses the reaction betaine aldehyde + NAD(+) + H2O = glycine betaine + NADH + 2 H(+). It functions in the pathway amine and polyamine biosynthesis; betaine biosynthesis via choline pathway; betaine from betaine aldehyde: step 1/1. Involved in the biosynthesis of the osmoprotectant glycine betaine. Catalyzes the irreversible oxidation of betaine aldehyde to the corresponding acid. The protein is Betaine aldehyde dehydrogenase of Burkholderia pseudomallei (strain K96243).